Reading from the N-terminus, the 61-residue chain is Metallothionein-1D (61 aa).

Positions 1 to 29 (MDPNCSCSTGGSCSCATSCTCKACRCTSC) are beta. Positions 5, 7, 13, 15, 19, 21, 24, 26, 29, 33, 34, 36, 37, 41, 44, 48, 50, 57, 59, and 60 each coordinate a divalent metal cation. Residues 30–61 (KKSCCSCCPAGCAKCAQGCICKGASDKCSCCA) form an alpha region.

Belongs to the metallothionein superfamily. Type 1 family. In terms of assembly, monomer.

Functionally, metallothioneins have a high content of cysteine residues that bind various heavy metals; these proteins are transcriptionally regulated by both heavy metals and glucocorticoids. This is Metallothionein-1D (MT1D) from Sus scrofa (Pig).